A 210-amino-acid chain; its full sequence is Pyridoxine/pyridoxamine 5'-phosphate oxidase (210 aa).

Substrate is bound by residues 7–10 and K65; that span reads REDY. FMN-binding positions include 60-65, 75-76, R81, K82, and Q104; these read RMVLLK and FT. Residues Y122, R126, and S130 each contribute to the substrate site. FMN is bound by residues 139–140 and W183; that span reads QS. Position 189-191 (189-191) interacts with substrate; it reads RLH. R193 is an FMN binding site.

Belongs to the pyridoxamine 5'-phosphate oxidase family. As to quaternary structure, homodimer. FMN is required as a cofactor.

It catalyses the reaction pyridoxamine 5'-phosphate + O2 + H2O = pyridoxal 5'-phosphate + H2O2 + NH4(+). The enzyme catalyses pyridoxine 5'-phosphate + O2 = pyridoxal 5'-phosphate + H2O2. It participates in cofactor metabolism; pyridoxal 5'-phosphate salvage; pyridoxal 5'-phosphate from pyridoxamine 5'-phosphate: step 1/1. It functions in the pathway cofactor metabolism; pyridoxal 5'-phosphate salvage; pyridoxal 5'-phosphate from pyridoxine 5'-phosphate: step 1/1. In terms of biological role, catalyzes the oxidation of either pyridoxine 5'-phosphate (PNP) or pyridoxamine 5'-phosphate (PMP) into pyridoxal 5'-phosphate (PLP). The protein is Pyridoxine/pyridoxamine 5'-phosphate oxidase of Neisseria meningitidis serogroup B (strain ATCC BAA-335 / MC58).